The following is a 261-amino-acid chain: MYTDLKDKVVVITGGSTGLGRAMAVRFGQEEAKVVINYYNNEEEALDAKKEVEEAGGQAIIVQGDVTKEEDVVNLVQTAIKEFGTLDVMINNAGVENPVPSHELSLDNWNKVIDTNLTGAFLGSREAIKYFVENDIKGNVINMSSVHEMIPWPLFVHYAASKGGMKQMTETLALEYAPKGIRVNNIGPGAMNTPINAEKFADPVQRADVESMIPMGYIGKPEEVAAVAAFLASSQASYVTGITLFADGGMTKYPSFQTGRG.

Position 11-35 (Val11–Val35) interacts with NAD(+). Ser145 serves as a coordination point for substrate. The active-site Proton acceptor is Tyr158.

Belongs to the short-chain dehydrogenases/reductases (SDR) family. In terms of assembly, homotetramer.

The catalysed reaction is D-glucose + NAD(+) = D-glucono-1,5-lactone + NADH + H(+). It catalyses the reaction D-glucose + NADP(+) = D-glucono-1,5-lactone + NADPH + H(+). This Priestia megaterium (Bacillus megaterium) protein is Glucose 1-dehydrogenase 3 (gdhIII).